A 279-amino-acid chain; its full sequence is Digeranylgeranylglyceryl phosphate synthase (279 aa).

A run of 9 helical transmembrane segments spans residues 16 to 36, 40 to 60, 77 to 99, 104 to 121, 124 to 144, 146 to 166, 192 to 212, 220 to 240, and 259 to 279; these read LIAG…LPPI, LLIF…NDYF, GALS…ILIA, FEAF…YLYA, LKPQ…ITPI, GAIA…AFLV, IVWG…ATII, AGIG…LWAA, and LKIA…TKGV.

It belongs to the UbiA prenyltransferase family. DGGGP synthase subfamily. The cofactor is Mg(2+).

The protein resides in the cell membrane. The catalysed reaction is sn-3-O-(geranylgeranyl)glycerol 1-phosphate + (2E,6E,10E)-geranylgeranyl diphosphate = 2,3-bis-O-(geranylgeranyl)-sn-glycerol 1-phosphate + diphosphate. Its pathway is membrane lipid metabolism; glycerophospholipid metabolism. In terms of biological role, prenyltransferase that catalyzes the transfer of the geranylgeranyl moiety of geranylgeranyl diphosphate (GGPP) to the C2 hydroxyl of (S)-3-O-geranylgeranylglyceryl phosphate (GGGP). This reaction is the second ether-bond-formation step in the biosynthesis of archaeal membrane lipids. In Thermococcus sibiricus (strain DSM 12597 / MM 739), this protein is Digeranylgeranylglyceryl phosphate synthase.